A 498-amino-acid polypeptide reads, in one-letter code: POU domain protein 2, isoform A (498 aa).

Residues 1–30 (MMVLQQQQQQRLWDATTTSNTNTQTQQSAN) show a composition bias toward low complexity. The tract at residues 1 to 35 (MMVLQQQQQQRLWDATTTSNTNTQTQQSANVESTP) is disordered. 5 positions are modified to phosphoserine: serine 72, serine 211, serine 215, serine 217, and serine 219. The interval 191-273 (QMKQQQREDP…STPKPTSGLT (83 aa)) is disordered. The span at 207–222 (PLAKSPLRSPSLSPVP) shows a compositional bias: low complexity. Residues 228 to 251 (QQRTPPNSMTANSLGMSSAVMTPN) show a composition bias toward polar residues. Over residues 252-270 (TPSMQQQPQLQQSTPKPTS) the composition is skewed to low complexity. The POU-specific domain occupies 286–360 (EETTDLEELE…LLQKWLEDAD (75 aa)). The homeobox DNA-binding region spans 391 to 450 (RRKKRTSIETTVRTTLEKAFLMNCKPTSEEISQLSERLNMDKEVIRVWFCNRRQKEKRIN).

The protein belongs to the POU transcription factor family. Class-2 subfamily. As to expression, initial expression in cellular blastoderm stage, then in ectodermal stripes during germband extension. Broad expression in the neuroectoderm followed by limitation to discrete subsets of CNS cells, and expression in specific PNS neurons and support cells.

It is found in the nucleus. Its function is as follows. DNA-binding regulatory protein implicated in early development. Involved in neuronal cell fate decision. May act as an octamer-dependent activator of transcription. Could also play an early role in specific ectodermal cells, and a subsequent role in the embryonic nervous system. The sequence is that of POU domain protein 2, isoform A (pdm2) from Drosophila melanogaster (Fruit fly).